The following is a 591-amino-acid chain: MAPEINLPGPMSLIDNTKGQLVVNPEALKILSAITQPVVVVAIVGLYRTGKSYLMNKLAGKKNGFSLGSTVKSHTKGIWMWCVPHPKKPEHTLVLLDTEGLGDIEKGDNENDSWIFALAILLSSTFVYNSMGTINQQAMDQLHYVTELTDRIKANSSPGNNSVDDSADFVSFFPAFVWTLRDFTLELEVDGEPITADDYLELSLKLRKGTDKKSKSFNDPRLCIRKFFPKRKCFVFDWPAPKKYLAHLEQLKEEELNPDFIEQVAEFCSYILSHSNVKTLSGGIPVNGPRLESLVLTYVNAISSGDLPCMENAVLALAQIENSAAVEKAIAHYEQQMGQKVQLPTETLQELLDLHRDSEREAIEVFMKNSFKDVDQMFQRKLGAQLEARRDDFCKQNSKASSDCCMALLQDIFGPLEEDVKQGTFSKPGGYRLFTQKLQELKNKYYQVPRKGIQAKEVLKKYLESKEDVADALLQTDQSLSEKEKAIEVERIKAESAEAAKKMLEEIQKKNEEMMEQKEKSYQEHVKQLTEKMERDRAQLMAEQEKTLALKLQEQERLLKEGFENESKRLQKDIWDIQMRSKSLEPICNIL.

Residues 1-309 (MAPEINLPGP…NAISSGDLPC (309 aa)) are GTPase domain (Globular). Residues 35–276 (TQPVVVVAIV…FCSYILSHSN (242 aa)) enclose the GB1/RHD3-type G domain. GTP-binding positions include 45–52 (GLYRTGKS), 181–182 (RD), and leucine 245. Residue cysteine 588 is modified to Cysteine methyl ester. The S-geranylgeranyl cysteine moiety is linked to residue cysteine 588. Residues 589–591 (NIL) constitute a propeptide, removed in mature form.

It belongs to the TRAFAC class dynamin-like GTPase superfamily. GB1/RHD3 GTPase family. GB1 subfamily. Homodimer; homodimerization occurs upon GTP-binding and is required for the association with membranous structures. Heterodimer with other family members, including GBP1, GBP3, GBP4 and GBP5. (Microbial infection) Ubiquitinated by S.flexneri IpaH9.8, leading to its degradation by the proteasome, thereby preventing its ability to promote host defense against bacterial infection. In terms of processing, isoprenylation is required for proper subcellular location.

Its subcellular location is the cytoplasmic vesicle membrane. It localises to the golgi apparatus membrane. The protein resides in the cytoplasm. It is found in the perinuclear region. It catalyses the reaction GTP + H2O = GDP + phosphate + H(+). Functionally, interferon (IFN)-inducible GTPase that plays important roles in innate immunity against a diverse range of bacterial, viral and protozoan pathogens. Hydrolyzes GTP to GMP in 2 consecutive cleavage reactions, but the major reaction product is GDP. Following infection, recruited to the pathogen-containing vacuoles or vacuole-escaped bacteria and acts as a positive regulator of inflammasome assembly by promoting the release of inflammasome ligands from bacteria. Acts by promoting lysis of pathogen-containing vacuoles, releasing pathogens into the cytosol. Following pathogen release in the cytosol, promotes recruitment of proteins that mediate bacterial cytolysis: this liberates ligands that are detected by inflammasomes, such as lipopolysaccharide (LPS) that activates the non-canonical CASP4/CASP11 inflammasome or double-stranded DNA (dsDNA) that activates the AIM2 inflammasome. Confers protection to the protozoan pathogen Toxoplasma gondii. Independently of its GTPase activity, acts as an inhibitor of various viruses infectivity, such as HIV-1, Zika and influenza A viruses, by inhibiting FURIN-mediated maturation of viral envelope proteins. The polypeptide is Guanylate-binding protein 2 (Homo sapiens (Human)).